A 601-amino-acid polypeptide reads, in one-letter code: Probable translation initiation factor IF-2 (601 aa).

The region spanning 10–227 is the tr-type G domain; that stretch reads LRAPIVVVLG…VLAGLAQRYL (218 aa). Residues 19-26 are G1; it reads GHVDAGKT. Residue 19–26 coordinates GTP; sequence GHVDAGKT. Residues 44 to 48 are G2; sequence TMTQH. Residues 83–86 form a G3 region; the sequence is DTPG. GTP contacts are provided by residues 83-87 and 137-140; these read DTPGH and NKID. Residues 137–140 are G4; the sequence is NKID. The segment at 205-207 is G5; it reads SAV.

It belongs to the TRAFAC class translation factor GTPase superfamily. Classic translation factor GTPase family. IF-2 subfamily.

Function in general translation initiation by promoting the binding of the formylmethionine-tRNA to ribosomes. Seems to function along with eIF-2. The protein is Probable translation initiation factor IF-2 of Thermofilum pendens (strain DSM 2475 / Hrk 5).